The following is a 59-amino-acid chain: Inner kinetochore subunit fta6 (59 aa).

As to quaternary structure, component of the inner kinetochore constitutive centromere-associated network (CCAN) (also known as central kinetochore Sim4 complex in fission yeast), which is composed of at least cnl2, cnp3, cnp20, fta1, fta2, fta3, fta4, fta6, fta7, mal2, mhf1, mhf2, mis6, mis15, mis17, sim4 and wip1.

The protein resides in the nucleus. Its subcellular location is the chromosome. It localises to the centromere. It is found in the kinetochore. The protein localises to the cytoplasm. The protein resides in the cytoskeleton. Its subcellular location is the microtubule organizing center. It localises to the spindle pole body. In terms of biological role, component of the kinetochore, a multiprotein complex that assembles on centromeric DNA and attaches chromosomes to spindle microtubules, mediating chromosome segregation and sister chromatid segregation during meiosis and mitosis. Component of the inner kinetochore constitutive centromere-associated network (CCAN), which serves as a structural platform for outer kinetochore assembly. This chain is Inner kinetochore subunit fta6 (fta6), found in Schizosaccharomyces pombe (strain 972 / ATCC 24843) (Fission yeast).